Reading from the N-terminus, the 148-residue chain is SsrA-binding protein (148 aa).

Residues 124–148 (QFDKRETEKDRDWQREKARLMREKA) are disordered.

Belongs to the SmpB family.

The protein resides in the cytoplasm. Required for rescue of stalled ribosomes mediated by trans-translation. Binds to transfer-messenger RNA (tmRNA), required for stable association of tmRNA with ribosomes. tmRNA and SmpB together mimic tRNA shape, replacing the anticodon stem-loop with SmpB. tmRNA is encoded by the ssrA gene; the 2 termini fold to resemble tRNA(Ala) and it encodes a 'tag peptide', a short internal open reading frame. During trans-translation Ala-aminoacylated tmRNA acts like a tRNA, entering the A-site of stalled ribosomes, displacing the stalled mRNA. The ribosome then switches to translate the ORF on the tmRNA; the nascent peptide is terminated with the 'tag peptide' encoded by the tmRNA and targeted for degradation. The ribosome is freed to recommence translation, which seems to be the essential function of trans-translation. This chain is SsrA-binding protein, found in Ralstonia pickettii (strain 12J).